Reading from the N-terminus, the 244-residue chain is Inner kinetochore subunit fta7 (244 aa).

This sequence belongs to the CENP-Q/OKP1 family. In terms of assembly, component of the heterotetrameric kinetochore subcomplex COMA, which consists of fta2, fta7, mal2 and mis17. The COMA subcomplex is part of a larger constitutive centromere-associated network (CCAN) (also known as central kinetochore Sim4 complex in fission yeast), which is composed of at least cnl2, cnp3, cnp20, fta1, fta2, fta3, fta4, fta6, fta7, mal2, mhf1, mhf2, mis6, mis15, mis17, sim4 and wip1.

Its subcellular location is the nucleus. It localises to the chromosome. It is found in the centromere. The protein localises to the kinetochore. The protein resides in the cytoplasm. Its subcellular location is the cytoskeleton. It localises to the microtubule organizing center. It is found in the spindle pole body. In terms of biological role, component of the kinetochore, a multiprotein complex that assembles on centromeric DNA and attaches chromosomes to spindle microtubules, mediating chromosome segregation and sister chromatid segregation during meiosis and mitosis. Component of the inner kinetochore COMA complex, which connects centromere-associated proteins and the outer kinetochore. COMA interacts with other inner kinetochore proteins to form the inner kinetochore constitutive centromere-associated network (CCAN), which serves as a structural platform for outer kinetochore assembly. The chain is Inner kinetochore subunit fta7 (fta7) from Schizosaccharomyces pombe (strain 972 / ATCC 24843) (Fission yeast).